Reading from the N-terminus, the 478-residue chain is Ninja-family protein 8 (478 aa).

Disordered stretches follow at residues 1–247, 337–374, and 454–478; these read MDDD…LTPG, FTAK…EKKA, and DAPA…SAEN. Basic and acidic residues predominate over residues 23-35; sequence KARDAPLEPKAEP. Over residues 169-179 the composition is skewed to polar residues; that stretch reads ISISTDDGSTG. A compositionally biased stretch (acidic residues) spans 180 to 189; that stretch reads ENEDVAESEA. Residues 233–242 are compositionally biased toward low complexity; it reads SFSGSESSSG. The segment covering 339–358 has biased composition (basic and acidic residues); that stretch reads AKDKADQTGTKQVDDGKKPQ.

The protein belongs to the Ninja family.

It is found in the nucleus. This is Ninja-family protein 8 from Zea mays (Maize).